A 199-amino-acid polypeptide reads, in one-letter code: Probable molybdenum cofactor guanylyltransferase (199 aa).

GTP-binding positions include 6–8 (LAG), lysine 18, aspartate 65, and aspartate 97. Mg(2+) is bound at residue aspartate 97.

This sequence belongs to the MobA family. Mg(2+) is required as a cofactor.

It localises to the cytoplasm. The enzyme catalyses Mo-molybdopterin + GTP + H(+) = Mo-molybdopterin guanine dinucleotide + diphosphate. Its function is as follows. Transfers a GMP moiety from GTP to Mo-molybdopterin (Mo-MPT) cofactor (Moco or molybdenum cofactor) to form Mo-molybdopterin guanine dinucleotide (Mo-MGD) cofactor. The sequence is that of Probable molybdenum cofactor guanylyltransferase from Staphylococcus aureus (strain COL).